Reading from the N-terminus, the 72-residue chain is Large ribosomal subunit protein bL28 (72 aa).

Belongs to the bacterial ribosomal protein bL28 family.

This chain is Large ribosomal subunit protein bL28, found in Chlorobaculum tepidum (strain ATCC 49652 / DSM 12025 / NBRC 103806 / TLS) (Chlorobium tepidum).